The chain runs to 95 residues: Acylphosphatase (95 aa).

In terms of domain architecture, Acylphosphatase-like spans 8–95; the sequence is RVSARITGRV…DAFEGFRVRR (88 aa). Active-site residues include arginine 23 and asparagine 41.

This sequence belongs to the acylphosphatase family.

It catalyses the reaction an acyl phosphate + H2O = a carboxylate + phosphate + H(+). The chain is Acylphosphatase (acyP) from Salinibacter ruber (strain DSM 13855 / M31).